A 477-amino-acid polypeptide reads, in one-letter code: Protein nucleotidyltransferase YdiU (477 aa).

8 residues coordinate ATP: G89, G91, R92, K112, D124, G125, R178, and R185. The active-site Proton acceptor is the D257. Residues N258 and D267 each contribute to the Mg(2+) site. D267 contributes to the ATP binding site.

The protein belongs to the SELO family. Mg(2+) is required as a cofactor. It depends on Mn(2+) as a cofactor.

The enzyme catalyses L-seryl-[protein] + ATP = 3-O-(5'-adenylyl)-L-seryl-[protein] + diphosphate. It carries out the reaction L-threonyl-[protein] + ATP = 3-O-(5'-adenylyl)-L-threonyl-[protein] + diphosphate. The catalysed reaction is L-tyrosyl-[protein] + ATP = O-(5'-adenylyl)-L-tyrosyl-[protein] + diphosphate. It catalyses the reaction L-histidyl-[protein] + UTP = N(tele)-(5'-uridylyl)-L-histidyl-[protein] + diphosphate. The enzyme catalyses L-seryl-[protein] + UTP = O-(5'-uridylyl)-L-seryl-[protein] + diphosphate. It carries out the reaction L-tyrosyl-[protein] + UTP = O-(5'-uridylyl)-L-tyrosyl-[protein] + diphosphate. In terms of biological role, nucleotidyltransferase involved in the post-translational modification of proteins. It can catalyze the addition of adenosine monophosphate (AMP) or uridine monophosphate (UMP) to a protein, resulting in modifications known as AMPylation and UMPylation. The sequence is that of Protein nucleotidyltransferase YdiU from Synechocystis sp. (strain ATCC 27184 / PCC 6803 / Kazusa).